We begin with the raw amino-acid sequence, 450 residues long: Transcription factor AP-2 gamma (450 aa).

Residue Lys10 forms a Glycyl lysine isopeptide (Lys-Gly) (interchain with G-Cter in SUMO) linkage. Disordered stretches follow at residues 13–63 (EDCE…FPPP) and 90–126 (LHQP…GLLP). Positions 59–64 (YFPPPY) match the PPxY motif motif. Polar residues predominate over residues 95-110 (PTGSQQQAWPGRQSQE). Ser252 carries the phosphoserine; by PKA modification. An H-S-H (helix-span-helix), dimerization region spans residues 293 to 424 (RRKAAHVTLL…YIKEALIVID (132 aa)). The interval 431–450 (GDQSPADSNKTLEKMEKHRK) is disordered. A Phosphoserine modification is found at Ser434. Positions 440-450 (KTLEKMEKHRK) are enriched in basic and acidic residues.

This sequence belongs to the AP-2 family. Binds DNA as a dimer. Can form homodimers or heterodimers with other AP-2 family members. Interacts with WWOX. Interacts with UBE2I. Interacts with KCTD1; this interaction represses transcription activation. Interacts with CITED2 (via C-terminus); the interaction stimulates TFAP2B-transcriptional activity. Interacts with CITED4. Interacts with MTA1. Sumoylated on Lys-10; which inhibits transcriptional activity.

The protein resides in the nucleus. In terms of biological role, sequence-specific DNA-binding transcription factor that interacts with cellular enhancer elements to regulate transcription of selected genes, and which plays a key role in early embryonic development. AP-2 factors bind to the consensus sequence 5'-GCCNNNGGC-3' and activate genes involved in a large spectrum of important biological functions. TFAP2C plays a key role in early embryonic development by regulating both inner cell mass (ICM) and trophectoderm differentiation. At the 8-cell stage, during morula development, controls expression of cell-polarity genes. Upon trophoblast commitment, binds to late trophectoderm genes in blastocysts together with CDX2, and later to extra-embryonic ectoderm genes together with SOX2. Binds to both closed and open chromatin with other transcription factors. Involved in the MTA1-mediated epigenetic regulation of ESR1 expression in breast cancer. The protein is Transcription factor AP-2 gamma (TFAP2C) of Homo sapiens (Human).